The chain runs to 359 residues: Squamosa promoter-binding-like protein 13A (359 aa).

Positions 75–94 (AKPEGSRSSSSKRTRGNGVG) are disordered. The SBP-type zinc-finger motif lies at 98–175 (MPICLVDGCD…DGHNRRRRKP (78 aa)). The Zn(2+) site is built by Cys101, Cys106, Cys123, His126, Cys142, Cys145, His149, and Cys161. Positions 158-174 (KRSCRKRLDGHNRRRRK) match the Bipartite nuclear localization signal motif.

Zn(2+) serves as cofactor.

The protein localises to the nucleus. In terms of biological role, trans-acting factor that binds specifically to the consensus nucleotide sequence 5'-TNCGTACAA-3'. The polypeptide is Squamosa promoter-binding-like protein 13A (SPL13A) (Arabidopsis thaliana (Mouse-ear cress)).